We begin with the raw amino-acid sequence, 154 residues long: uncharacterized protein (154 aa).

This is an uncharacterized protein from Methanocaldococcus jannaschii (strain ATCC 43067 / DSM 2661 / JAL-1 / JCM 10045 / NBRC 100440) (Methanococcus jannaschii).